The chain runs to 352 residues: Selenide, water dikinase (352 aa).

The active site involves Cys-23. ATP contacts are provided by residues Lys-26 and 54-56 (SRD). Residue Asp-57 coordinates Mg(2+). ATP contacts are provided by residues Asp-74, Asp-97, and 145–147 (GHS). Residue Asp-97 coordinates Mg(2+). Asp-233 is a binding site for Mg(2+).

Belongs to the selenophosphate synthase 1 family. Class I subfamily. As to quaternary structure, homodimer. It depends on Mg(2+) as a cofactor.

The enzyme catalyses hydrogenselenide + ATP + H2O = selenophosphate + AMP + phosphate + 2 H(+). Functionally, synthesizes selenophosphate from selenide and ATP. This chain is Selenide, water dikinase, found in Shewanella sp. (strain MR-7).